Consider the following 87-residue polypeptide: DNA-directed RNA polymerase subunit omega (87 aa).

Belongs to the RNA polymerase subunit omega family. In terms of assembly, the RNAP catalytic core consists of 2 alpha, 1 beta, 1 beta' and 1 omega subunit. When a sigma factor is associated with the core the holoenzyme is formed, which can initiate transcription.

The catalysed reaction is RNA(n) + a ribonucleoside 5'-triphosphate = RNA(n+1) + diphosphate. Promotes RNA polymerase assembly. Latches the N- and C-terminal regions of the beta' subunit thereby facilitating its interaction with the beta and alpha subunits. This Thioalkalivibrio sulfidiphilus (strain HL-EbGR7) protein is DNA-directed RNA polymerase subunit omega.